Reading from the N-terminus, the 112-residue chain is Putative acyl carrier protein, mitochondrial (112 aa).

The transit peptide at 1 to 28 (MLSRFSSQLRFISAVRPVIPKFQPLRFY) directs the protein to the mitochondrion. The Carrier domain maps to 33–109 (PDAEKRILKV…DAISYITKNP (77 aa)). Serine 69 bears the O-(pantetheine 4'-phosphoryl)serine mark.

The protein belongs to the acyl carrier protein (ACP) family. In terms of processing, 4'-phosphopantetheine is transferred from CoA to a specific serine of apo-ACP by acpS. This modification is essential for activity because fatty acids are bound in thioester linkage to the sulfhydryl of the prosthetic group.

The protein resides in the mitochondrion. The protein operates within lipid metabolism; fatty acid biosynthesis. Carrier of the growing fatty acid chain in fatty acid biosynthesis. May be involved in the synthesis of very-long-chain fatty acids. This chain is Putative acyl carrier protein, mitochondrial, found in Schizosaccharomyces pombe (strain 972 / ATCC 24843) (Fission yeast).